A 239-amino-acid polypeptide reads, in one-letter code: Small ribosomal subunit protein eS6A (239 aa).

Phosphoserine occurs at positions 235 and 236.

It belongs to the eukaryotic ribosomal protein eS6 family. Component of the small ribosomal subunit (SSU). Mature yeast ribosomes consist of a small (40S) and a large (60S) subunit. The 40S small subunit contains 1 molecule of ribosomal RNA (18S rRNA) and at least 33 different proteins. The large 60S subunit contains 3 rRNA molecules (25S, 5.8S and 5S rRNA) and at least 46 different proteins. Interacts with snoRNA U3. uS11 interacts with MPP10. Component of the ribosomal small subunit (SSU) processome composed of at least 40 protein subunits and snoRNA U3. In terms of processing, phosphorylated.

Its subcellular location is the cytoplasm. Its function is as follows. Component of the ribosome, a large ribonucleoprotein complex responsible for the synthesis of proteins in the cell. The small ribosomal subunit (SSU) binds messenger RNAs (mRNAs) and translates the encoded message by selecting cognate aminoacyl-transfer RNA (tRNA) molecules. The large subunit (LSU) contains the ribosomal catalytic site termed the peptidyl transferase center (PTC), which catalyzes the formation of peptide bonds, thereby polymerizing the amino acids delivered by tRNAs into a polypeptide chain. The nascent polypeptides leave the ribosome through a tunnel in the LSU and interact with protein factors that function in enzymatic processing, targeting, and the membrane insertion of nascent chains at the exit of the ribosomal tunnel. eS6 is involved in nucleolar processing of pre-18S ribosomal RNA and ribosome assembly. In Schizosaccharomyces pombe (strain 972 / ATCC 24843) (Fission yeast), this protein is Small ribosomal subunit protein eS6A (rps601).